The sequence spans 210 residues: uncharacterized protein (210 aa).

A CS domain is found at 2-91 (SRHPEVKWAQ…AEAKWWKKLV (90 aa)). Residues 165 to 210 (GMGGMGGMDEFEDESDDEEEVSKPQDAEKAAEAGKSQESDAKTETS) are disordered. The span at 173–184 (DEFEDESDDEEE) shows a compositional bias: acidic residues. Basic and acidic residues predominate over residues 185 to 210 (VSKPQDAEKAAEAGKSQESDAKTETS).

This is an uncharacterized protein from Oryza sativa subsp. indica (Rice).